The primary structure comprises 431 residues: Probable carboxylic ester hydrolase LipM (431 aa).

A run of 3 helical transmembrane segments spans residues 7–27, 38–58, and 75–95; these read IHVIRQIGALVVAAVTAAATI, FASLWSWFIGLVVTEFPLPTL, and PVRAVSWLVAAFSALGLLNLS. Residues serine 261, aspartate 357, and histidine 390 contribute to the active site.

The protein belongs to the 'GDXG' lipolytic enzyme family.

The protein resides in the membrane. The chain is Probable carboxylic ester hydrolase LipM from Mycobacterium tuberculosis (strain ATCC 25618 / H37Rv).